Consider the following 122-residue polypeptide: Large ribosomal subunit protein bL12 (122 aa).

Belongs to the bacterial ribosomal protein bL12 family. Homodimer. Part of the ribosomal stalk of the 50S ribosomal subunit. Forms a multimeric L10(L12)X complex, where L10 forms an elongated spine to which 2 to 4 L12 dimers bind in a sequential fashion. Binds GTP-bound translation factors.

Functionally, forms part of the ribosomal stalk which helps the ribosome interact with GTP-bound translation factors. Is thus essential for accurate translation. The polypeptide is Large ribosomal subunit protein bL12 (Myxococcus xanthus (strain DK1622)).